The chain runs to 272 residues: uncharacterized protein (272 aa).

The next 6 helical transmembrane spans lie at 20 to 37, 57 to 77, 97 to 119, 155 to 177, 184 to 203, and 234 to 256; these read VYLS…NLLI, HPLT…HFSL, LNVS…IMLM, SIAT…YVIF, LVSL…VTLG, and PYSI…WLVI.

The protein localises to the cell membrane. This is an uncharacterized protein from Halalkalibacterium halodurans (strain ATCC BAA-125 / DSM 18197 / FERM 7344 / JCM 9153 / C-125) (Bacillus halodurans).